A 438-amino-acid polypeptide reads, in one-letter code: Enolase (438 aa).

Positions 159 and 168 each coordinate substrate. The Proton donor role is filled by glutamate 211. 3 residues coordinate Mg(2+): aspartate 246, glutamate 297, and aspartate 322. Substrate-binding residues include glutamate 297 and aspartate 322. Lysine 347 acts as the Proton acceptor in catalysis. Residues 374–377 (SHRS) and lysine 398 each bind substrate.

It belongs to the enolase family. As to quaternary structure, homodimer. Mg(2+) serves as cofactor.

It is found in the cytoplasm. It carries out the reaction (2R)-2-phosphoglycerate = phosphoenolpyruvate + H2O. It functions in the pathway carbohydrate degradation; glycolysis; pyruvate from D-glyceraldehyde 3-phosphate: step 4/5. Involved in osmoadaptation. This Emericella nidulans (strain FGSC A4 / ATCC 38163 / CBS 112.46 / NRRL 194 / M139) (Aspergillus nidulans) protein is Enolase (enoA).